Consider the following 942-residue polypeptide: UvrABC system protein A (942 aa).

G31–S38 provides a ligand contact to ATP. Residues C253–C280 form a C4-type zinc finger. ABC transporter domains lie at W310 to I586 and Y606 to T936. Residue G639–S646 participates in ATP binding. A C4-type zinc finger spans residues C739–C765.

The protein belongs to the ABC transporter superfamily. UvrA family. As to quaternary structure, forms a heterotetramer with UvrB during the search for lesions.

It is found in the cytoplasm. In terms of biological role, the UvrABC repair system catalyzes the recognition and processing of DNA lesions. UvrA is an ATPase and a DNA-binding protein. A damage recognition complex composed of 2 UvrA and 2 UvrB subunits scans DNA for abnormalities. When the presence of a lesion has been verified by UvrB, the UvrA molecules dissociate. This Haemophilus ducreyi (strain 35000HP / ATCC 700724) protein is UvrABC system protein A.